A 166-amino-acid polypeptide reads, in one-letter code: Nicotine metabolites export pump subunit NepB (166 aa).

4 helical membrane-spanning segments follow: residues 51 to 71 (LHAWLYLGSAITTEVTGTVIL), 77 to 97 (FQLPAQTTAAMALYAFSFFLL), 108 to 128 (VAYATWSGLGTVAVAFAGAII), and 133 to 153 (VTLGRITAITAVIGGIVILNL).

It belongs to the drug/metabolite transporter (DMT) superfamily. Small multidrug resistance (SMR) (TC 2.A.7.1) family. NepA/NepB subfamily. The efflux pump is composed of NepA and NepB.

The protein localises to the cell membrane. Component of an efflux pump responsible for the transport of nicotine breakdown products, in particular methylamine, out of the cell. This pump apparently serves as a metabolic valve for nicotine catabolites and may protect the bacteria from the potentially toxic side effects of these compounds. The protein is Nicotine metabolites export pump subunit NepB (nepB) of Paenarthrobacter nicotinovorans (Arthrobacter nicotinovorans).